A 224-amino-acid chain; its full sequence is Cytidylate kinase (224 aa).

11 to 19 (GPAGAGKST) provides a ligand contact to ATP.

It belongs to the cytidylate kinase family. Type 1 subfamily.

It localises to the cytoplasm. It catalyses the reaction CMP + ATP = CDP + ADP. The catalysed reaction is dCMP + ATP = dCDP + ADP. The chain is Cytidylate kinase from Lysinibacillus sphaericus (strain C3-41).